Consider the following 353-residue polypeptide: 3-isopropylmalate dehydrogenase (353 aa).

76 to 89 (GPKWDDPRAKVRPE) contributes to the NAD(+) binding site. Positions 96, 106, 134, and 223 each coordinate substrate. Mg(2+)-binding residues include Asp223, Asp247, and Asp251. 281 to 293 (GSAPDIAGKGIAN) is an NAD(+) binding site.

Belongs to the isocitrate and isopropylmalate dehydrogenases family. LeuB type 1 subfamily. Homodimer. It depends on Mg(2+) as a cofactor. Mn(2+) is required as a cofactor.

It is found in the cytoplasm. It carries out the reaction (2R,3S)-3-isopropylmalate + NAD(+) = 4-methyl-2-oxopentanoate + CO2 + NADH. Its pathway is amino-acid biosynthesis; L-leucine biosynthesis; L-leucine from 3-methyl-2-oxobutanoate: step 3/4. Its function is as follows. Catalyzes the oxidation of 3-carboxy-2-hydroxy-4-methylpentanoate (3-isopropylmalate) to 3-carboxy-4-methyl-2-oxopentanoate. The product decarboxylates to 4-methyl-2 oxopentanoate. The protein is 3-isopropylmalate dehydrogenase of Anaeromyxobacter dehalogenans (strain 2CP-C).